A 330-amino-acid chain; its full sequence is tRNA-modifying protein YgfZ (330 aa).

2 residues coordinate folate: Trp-28 and Trp-190.

The protein belongs to the tRNA-modifying YgfZ family.

It localises to the cytoplasm. In terms of biological role, folate-binding protein involved in regulating the level of ATP-DnaA and in the modification of some tRNAs. It is probably a key factor in regulatory networks that act via tRNA modification, such as initiation of chromosomal replication. The sequence is that of tRNA-modifying protein YgfZ from Yersinia pseudotuberculosis serotype O:1b (strain IP 31758).